Consider the following 305-residue polypeptide: Putative lipid kinase SaurJH9_0749 (305 aa).

A DAGKc domain is found at 3–139; the sequence is NKYTHGVLFY…YDVIKINNQY (137 aa). ATP contacts are provided by residues serine 44, 74–80, and threonine 101; that span reads GDGTVNE. Serine 220, aspartate 223, and glutamate 225 together coordinate Mg(2+). Glutamate 281 acts as the Proton acceptor in catalysis.

This sequence belongs to the diacylglycerol/lipid kinase family. It depends on Mg(2+) as a cofactor.

Its function is as follows. May catalyze the ATP-dependent phosphorylation of lipids other than diacylglycerol (DAG). The chain is Putative lipid kinase SaurJH9_0749 from Staphylococcus aureus (strain JH9).